A 288-amino-acid polypeptide reads, in one-letter code: tRNA-cytidine(32) 2-sulfurtransferase (288 aa).

The short motif at 70–75 is the PP-loop motif element; that stretch reads SGGKDS. Cysteine 145, cysteine 148, and cysteine 236 together coordinate [4Fe-4S] cluster.

This sequence belongs to the TtcA family. As to quaternary structure, homodimer. The cofactor is Mg(2+). It depends on [4Fe-4S] cluster as a cofactor.

It is found in the cytoplasm. The enzyme catalyses cytidine(32) in tRNA + S-sulfanyl-L-cysteinyl-[cysteine desulfurase] + AH2 + ATP = 2-thiocytidine(32) in tRNA + L-cysteinyl-[cysteine desulfurase] + A + AMP + diphosphate + H(+). Its pathway is tRNA modification. Functionally, catalyzes the ATP-dependent 2-thiolation of cytidine in position 32 of tRNA, to form 2-thiocytidine (s(2)C32). The sulfur atoms are provided by the cysteine/cysteine desulfurase (IscS) system. This Bartonella tribocorum (strain CIP 105476 / IBS 506) protein is tRNA-cytidine(32) 2-sulfurtransferase.